The chain runs to 910 residues: Protein translocase subunit SecA (910 aa).

Residues Gln-89, 107–111, and Asp-502 contribute to the ATP site; that span reads GEGKT. Cys-894, Cys-896, Cys-905, and His-906 together coordinate Zn(2+).

It belongs to the SecA family. Monomer and homodimer. Part of the essential Sec protein translocation apparatus which comprises SecA, SecYEG and auxiliary proteins SecDF-YajC and YidC. Zn(2+) is required as a cofactor.

Its subcellular location is the cell inner membrane. The protein localises to the cytoplasm. It carries out the reaction ATP + H2O + cellular proteinSide 1 = ADP + phosphate + cellular proteinSide 2.. Functionally, part of the Sec protein translocase complex. Interacts with the SecYEG preprotein conducting channel. Has a central role in coupling the hydrolysis of ATP to the transfer of proteins into and across the cell membrane, serving both as a receptor for the preprotein-SecB complex and as an ATP-driven molecular motor driving the stepwise translocation of polypeptide chains across the membrane. In Mesorhizobium japonicum (strain LMG 29417 / CECT 9101 / MAFF 303099) (Mesorhizobium loti (strain MAFF 303099)), this protein is Protein translocase subunit SecA.